Consider the following 408-residue polypeptide: GTPase Obg (408 aa).

The Obg domain occupies 1–159 (MKFVDEVSIR…RDLKMEMKVL (159 aa)). The interval 127–150 (NTRFKSSTNRAPRQTTPGKPGDQR) is disordered. The segment covering 129 to 143 (RFKSSTNRAPRQTTP) has biased composition (polar residues). The OBG-type G domain occupies 160-333 (ADVGLLGLPN…LSHDLMRYLE (174 aa)). Residues 166–173 (GLPNAGKS), 191–195 (FTTLV), 213–216 (DIPG), 283–286 (NKSD), and 314–316 (SAI) contribute to the GTP site. Residues serine 173 and threonine 193 each contribute to the Mg(2+) site. Positions 382-408 (HDIGDDDGWDDDFEDDEDGPEIIYVRD) are disordered. The span at 385 to 401 (GDDDGWDDDFEDDEDGP) shows a compositional bias: acidic residues.

This sequence belongs to the TRAFAC class OBG-HflX-like GTPase superfamily. OBG GTPase family. As to quaternary structure, monomer. Mg(2+) is required as a cofactor.

It localises to the cytoplasm. Functionally, an essential GTPase which binds GTP, GDP and possibly (p)ppGpp with moderate affinity, with high nucleotide exchange rates and a fairly low GTP hydrolysis rate. Plays a role in control of the cell cycle, stress response, ribosome biogenesis and in those bacteria that undergo differentiation, in morphogenesis control. The chain is GTPase Obg from Pseudomonas putida (strain GB-1).